A 119-amino-acid chain; its full sequence is Holo-[acyl-carrier-protein] synthase (119 aa).

Mg(2+) contacts are provided by D8 and E59.

This sequence belongs to the P-Pant transferase superfamily. AcpS family. The cofactor is Mg(2+).

The protein resides in the cytoplasm. It carries out the reaction apo-[ACP] + CoA = holo-[ACP] + adenosine 3',5'-bisphosphate + H(+). Its function is as follows. Transfers the 4'-phosphopantetheine moiety from coenzyme A to a Ser of acyl-carrier-protein. In Staphylococcus aureus (strain JH1), this protein is Holo-[acyl-carrier-protein] synthase.